Reading from the N-terminus, the 498-residue chain is Lipase 3 (498 aa).

Residues Cys-60 and Cys-91 are joined by a disulfide bond. The N-linked (GlcNAc...) asparagine glycan is linked to Asn-193. The active-site Acyl-ester intermediate is Ser-200. A glycan (N-linked (GlcNAc...) asparagine) is linked at Asn-384. The active-site Charge relay system is His-409. Asn-418 carries N-linked (GlcNAc...) asparagine glycosylation.

This sequence belongs to the type-B carboxylesterase/lipase family.

The catalysed reaction is a triacylglycerol + H2O = a diacylglycerol + a fatty acid + H(+). The chain is Lipase 3 (LIP3) from Yarrowia lipolytica (strain CLIB 122 / E 150) (Yeast).